Consider the following 516-residue polypeptide: uncharacterized protein (516 aa).

PFTB repeat units lie at residues Arg-45–Asp-86 and Asp-401–Glu-443.

This is an uncharacterized protein from Bradyrhizobium diazoefficiens (strain JCM 10833 / BCRC 13528 / IAM 13628 / NBRC 14792 / USDA 110).